An 804-amino-acid chain; its full sequence is Leucine--tRNA ligase (804 aa).

Residues 39-50 (PFPSGKGLHVGH) carry the 'HIGH' region motif. Positions 573 to 577 (KMSKS) match the 'KMSKS' region motif. K576 contributes to the ATP binding site.

This sequence belongs to the class-I aminoacyl-tRNA synthetase family.

It is found in the cytoplasm. It carries out the reaction tRNA(Leu) + L-leucine + ATP = L-leucyl-tRNA(Leu) + AMP + diphosphate. In Lactobacillus gasseri (strain ATCC 33323 / DSM 20243 / BCRC 14619 / CIP 102991 / JCM 1131 / KCTC 3163 / NCIMB 11718 / NCTC 13722 / AM63), this protein is Leucine--tRNA ligase.